The sequence spans 508 residues: Protein ultraspiracle (508 aa).

Residues 1 to 103 (MDNCDQDASF…NHPLSGSKHL (103 aa)) form a modulating region. Disordered regions lie at residues 21–40 (PDISQLNDSNNSSFSPKAES) and 55–92 (PGSNSASSNNNSAGDAQMAQAPNSAGGSAAAAVQQQYP). A compositionally biased stretch (polar residues) spans 24–35 (SQLNDSNNSSFS). Serine 35 carries the post-translational modification Phosphoserine. The span at 57–90 (SNSASSNNNSAGDAQMAQAPNSAGGSAAAAVQQQ) shows a compositional bias: low complexity. 2 NR C4-type zinc fingers span residues 104–124 (CSICGDRASGKHYGVYSCEGC) and 140–164 (CRENRNCIIDKRQRNRCQYCRYQKC). A DNA-binding region (nuclear receptor) is located at residues 104-169 (CSICGDRASG…RYQKCLTCGM (66 aa)). A hinge region spans residues 170–223 (KREAVQEERQRGARNAAGRLSASGGGSSGPGSVGGSSSQGGGGGGGVSGGMGSG). The disordered stretch occupies residues 178-228 (RQRGARNAAGRLSASGGGSSGPGSVGGSSSQGGGGGGGVSGGMGSGNGSDD). The span at 192-224 (SGGGSSGPGSVGGSSSQGGGGGGGVSGGMGSGN) shows a compositional bias: gly residues. The 260-residue stretch at 239–498 (SIERIIEAEQ…ELFLEQLEAP (260 aa)) folds into the NR LBD domain.

It belongs to the nuclear hormone receptor family. NR2 subfamily. As to quaternary structure, heterodimer of USP and ECR. Only the heterodimer is capable of high-affinity binding to ecdysone.

The protein localises to the nucleus. Receptor for ecdysone. May be an important modulator of insect metamorphosis. Plays an important part in embryonic and post-embryonic development. Binds to ecdysone response elements (ECRES) such as in the promoter region of s15 chorion gene. This is Protein ultraspiracle (usp) from Drosophila melanogaster (Fruit fly).